The following is a 214-amino-acid chain: Pyridoxine/pyridoxamine 5'-phosphate oxidase (214 aa).

Substrate-binding positions include 9–12 (RLDY) and Lys-67. Residues 62 to 67 (RMVLLK), 77 to 78 (FT), Lys-84, and Gln-106 each bind FMN. Residues Tyr-124, Arg-128, and Ser-132 each contribute to the substrate site. FMN is bound by residues 141–142 (QS) and Trp-186. 192–194 (RLH) serves as a coordination point for substrate. Arg-196 lines the FMN pocket.

The protein belongs to the pyridoxamine 5'-phosphate oxidase family. In terms of assembly, homodimer. Requires FMN as cofactor.

The catalysed reaction is pyridoxamine 5'-phosphate + O2 + H2O = pyridoxal 5'-phosphate + H2O2 + NH4(+). It carries out the reaction pyridoxine 5'-phosphate + O2 = pyridoxal 5'-phosphate + H2O2. It functions in the pathway cofactor metabolism; pyridoxal 5'-phosphate salvage; pyridoxal 5'-phosphate from pyridoxamine 5'-phosphate: step 1/1. The protein operates within cofactor metabolism; pyridoxal 5'-phosphate salvage; pyridoxal 5'-phosphate from pyridoxine 5'-phosphate: step 1/1. In terms of biological role, catalyzes the oxidation of either pyridoxine 5'-phosphate (PNP) or pyridoxamine 5'-phosphate (PMP) into pyridoxal 5'-phosphate (PLP). In Microcystis aeruginosa (strain NIES-843 / IAM M-2473), this protein is Pyridoxine/pyridoxamine 5'-phosphate oxidase.